Consider the following 404-residue polypeptide: 8-amino-7-oxononanoate synthase (404 aa).

Arg-20 is a substrate binding site. Pyridoxal 5'-phosphate is bound at residue 116-117 (GY). His-141 contacts substrate. Pyridoxal 5'-phosphate contacts are provided by Ser-187, His-215, and Thr-243. An N6-(pyridoxal phosphate)lysine modification is found at Lys-246. A substrate-binding site is contributed by Thr-366.

Belongs to the class-II pyridoxal-phosphate-dependent aminotransferase family. BioF subfamily. In terms of assembly, homodimer. Requires pyridoxal 5'-phosphate as cofactor.

The enzyme catalyses 6-carboxyhexanoyl-[ACP] + L-alanine + H(+) = (8S)-8-amino-7-oxononanoate + holo-[ACP] + CO2. The protein operates within cofactor biosynthesis; biotin biosynthesis. Its function is as follows. Catalyzes the decarboxylative condensation of pimeloyl-[acyl-carrier protein] and L-alanine to produce 8-amino-7-oxononanoate (AON), [acyl-carrier protein], and carbon dioxide. The chain is 8-amino-7-oxononanoate synthase from Cupriavidus necator (strain ATCC 17699 / DSM 428 / KCTC 22496 / NCIMB 10442 / H16 / Stanier 337) (Ralstonia eutropha).